We begin with the raw amino-acid sequence, 591 residues long: Aspartate--tRNA ligase (591 aa).

An L-aspartate-binding site is contributed by Glu176. The aspartate stretch occupies residues Gln200–Lys203. Arg222 serves as a coordination point for L-aspartate. ATP-binding positions include Arg222–Glu224 and Gln231. An L-aspartate-binding site is contributed by His450. Residue Glu484 participates in ATP binding. Residue Arg491 participates in L-aspartate binding. Gly536–Arg539 provides a ligand contact to ATP.

Belongs to the class-II aminoacyl-tRNA synthetase family. Type 1 subfamily. Homodimer.

Its subcellular location is the cytoplasm. It carries out the reaction tRNA(Asp) + L-aspartate + ATP = L-aspartyl-tRNA(Asp) + AMP + diphosphate. In terms of biological role, catalyzes the attachment of L-aspartate to tRNA(Asp) in a two-step reaction: L-aspartate is first activated by ATP to form Asp-AMP and then transferred to the acceptor end of tRNA(Asp). The protein is Aspartate--tRNA ligase of Listeria monocytogenes serotype 4b (strain F2365).